We begin with the raw amino-acid sequence, 827 residues long: Disintegrin and metalloproteinase domain-containing protein 17 (827 aa).

An N-terminal signal peptide occupies residues 1-17 (MRQRLLFLTTLVPFVLA). Residues 18 to 214 (PRPPEEPGSG…SEEFVRRVKR (197 aa)) constitute a propeptide that is removed on maturation. The N-linked (GlcNAc...) asparagine glycan is linked to asparagine 157. A Cysteine switch motif is present at residues 182 to 189 (KVCGYLNA). Position 184 (cysteine 184) interacts with Zn(2+). At 215-671 (RAEPNPLKNT…NTFGKFLADN (457 aa)) the chain is on the extracellular side. Residues 223–474 (NTCKLLVVAD…KAQECFQERS (252 aa)) enclose the Peptidase M12B domain. Cystine bridges form between cysteine 225-cysteine 333, cysteine 365-cysteine 469, and cysteine 423-cysteine 453. Asparagine 264 is a glycosylation site (N-linked (GlcNAc...) asparagine). Histidine 405 provides a ligand contact to Zn(2+). Glutamate 406 is a catalytic residue. Residues histidine 409 and histidine 415 each contribute to the Zn(2+) site. Residues asparagine 452, asparagine 498, asparagine 539, and asparagine 551 are each glycosylated (N-linked (GlcNAc...) asparagine). The 89-residue stretch at 475–563 (NKVCGNSRVD…ECPPPGDAED (89 aa)) folds into the Disintegrin domain. 4 disulfides stabilise this stretch: cysteine 534–cysteine 555, cysteine 573–cysteine 582, cysteine 578–cysteine 591, and cysteine 593–cysteine 600. Positions 603–671 (CCRNLSGPCV…NTFGKFLADN (69 aa)) are crambin-like. A glycan (N-linked (GlcNAc...) asparagine) is linked at asparagine 606. The helical transmembrane segment at 672–692 (IVGSVLVFSLIFWIPFSILVH) threads the bilayer. The Cytoplasmic portion of the chain corresponds to 693–827 (CVDKKLDKQY…SRVDSKETEC (135 aa)). Residues 731–738 (PAPQTPGR) carry the SH3-binding motif. At threonine 735 the chain carries Phosphothreonine; by MAPK14. Phosphothreonine is present on threonine 764. Residues 766–827 (QEDPSTDSHV…SRVDSKETEC (62 aa)) are disordered. A Phosphoserine modification is found at serine 770. Composition is skewed to basic and acidic residues over residues 771 to 784 (TDSHVDDDGFEKDP), 794 to 810 (SFEDLTDHPVTRSEKAA), and 818 to 827 (SRVDSKETEC). Residues serine 794 and serine 822 each carry the phosphoserine modification.

In terms of assembly, interacts with MAD2L1, MAPK14 and MUC1. Interacts with iRhom1/RHBDF1 and iRhom2/RHBDF2. Interacts with FRMD8 via its interaction with iRhom1/RHBDF1 and iRhom2/RHBDF2. Interacts with TSPAN8. The cofactor is Zn(2+). Post-translationally, the precursor is cleaved by a furin endopeptidase. In terms of processing, phosphorylated. Stimulation by growth factor or phorbol 12-myristate 13-acetate induces phosphorylation of Ser-822 but decreases phosphorylation of Ser-794. Phosphorylation at Thr-735 by MAPK14 is required for ADAM17-mediated ectodomain shedding.

It is found in the membrane. It catalyses the reaction Narrow endopeptidase specificity. Cleaves Pro-Leu-Ala-Gln-Ala-|-Val-Arg-Ser-Ser-Ser in the membrane-bound, 26-kDa form of tumor necrosis factor alpha (TNFalpha). Similarly cleaves other membrane-anchored, cell-surface proteins to 'shed' the extracellular domains.. Functionally, transmembrane metalloprotease which mediates the ectodomain shedding of a myriad of transmembrane proteins including adhesion proteins, growth factor precursors and cytokines important for inflammation and immunity. Cleaves the membrane-bound precursor of TNF-alpha to its mature soluble form. Responsible for the proteolytical release of soluble JAM3 from endothelial cells surface. Responsible for the proteolytic release of several other cell-surface proteins, including p75 TNF-receptor, interleukin 1 receptor type II, p55 TNF-receptor, transforming growth factor-alpha, L-selectin, growth hormone receptor, MUC1 and the amyloid precursor protein. Acts as an activator of Notch pathway by mediating cleavage of Notch, generating the membrane-associated intermediate fragment called Notch extracellular truncation (NEXT). Plays a role in the proteolytic processing of ACE2. Plays a role in hemostasis through shedding of GP1BA, the platelet glycoprotein Ib alpha chain. Mediates the proteolytic cleavage of LAG3, leading to release the secreted form of LAG3. Mediates the proteolytic cleavage of IL6R, leading to the release of secreted form of IL6R. Mediates the proteolytic cleavage and shedding of FCGR3A upon NK cell stimulation, a mechanism that allows for increased NK cell motility and detachment from opsonized target cells. Cleaves TREM2, resulting in shedding of the TREM2 ectodomain. In Rattus norvegicus (Rat), this protein is Disintegrin and metalloproteinase domain-containing protein 17 (Adam17).